A 502-amino-acid polypeptide reads, in one-letter code: Glycerol kinase (502 aa).

Threonine 14 lines the ADP pocket. ATP is bound by residues threonine 14, threonine 15, and serine 16. Threonine 14 is a sn-glycerol 3-phosphate binding site. Arginine 18 is a binding site for ADP. The sn-glycerol 3-phosphate site is built by arginine 84, glutamate 85, tyrosine 136, and aspartate 246. Positions 84, 85, 136, 246, and 247 each coordinate glycerol. The ADP site is built by threonine 268 and glycine 311. 4 residues coordinate ATP: threonine 268, glycine 311, glutamine 315, and glycine 412. 2 residues coordinate ADP: glycine 412 and asparagine 416.

The protein belongs to the FGGY kinase family. Homotetramer and homodimer (in equilibrium). Heterodimer with EIIA-Glc. Binds 1 zinc ion per glycerol kinase EIIA-Glc dimer. The zinc ion is important for dimerization.

The enzyme catalyses glycerol + ATP = sn-glycerol 3-phosphate + ADP + H(+). It functions in the pathway polyol metabolism; glycerol degradation via glycerol kinase pathway; sn-glycerol 3-phosphate from glycerol: step 1/1. Its activity is regulated as follows. Activity of this regulatory enzyme is affected by several metabolites. Allosterically and non-competitively inhibited by fructose 1,6-bisphosphate (FBP) and unphosphorylated phosphocarrier protein EIIA-Glc (III-Glc), an integral component of the bacterial phosphotransferase (PTS) system. In terms of biological role, key enzyme in the regulation of glycerol uptake and metabolism. Catalyzes the phosphorylation of glycerol to yield sn-glycerol 3-phosphate. In Shigella flexneri, this protein is Glycerol kinase.